We begin with the raw amino-acid sequence, 245 residues long: 6-carboxyhexanoate--CoA ligase (245 aa).

The protein belongs to the BioW family. As to quaternary structure, homodimer. It depends on Mg(2+) as a cofactor.

The catalysed reaction is heptanedioate + ATP + CoA = 6-carboxyhexanoyl-CoA + AMP + diphosphate. It participates in metabolic intermediate metabolism; pimeloyl-CoA biosynthesis; pimeloyl-CoA from pimelate: step 1/1. In terms of biological role, catalyzes the transformation of pimelate into pimeloyl-CoA with concomitant hydrolysis of ATP to AMP. The protein is 6-carboxyhexanoate--CoA ligase of Thermodesulfovibrio yellowstonii (strain ATCC 51303 / DSM 11347 / YP87).